Reading from the N-terminus, the 251-residue chain is Aspartate/glutamate leucyltransferase (251 aa).

It belongs to the R-transferase family. Bpt subfamily.

The protein resides in the cytoplasm. It catalyses the reaction N-terminal L-glutamyl-[protein] + L-leucyl-tRNA(Leu) = N-terminal L-leucyl-L-glutamyl-[protein] + tRNA(Leu) + H(+). The catalysed reaction is N-terminal L-aspartyl-[protein] + L-leucyl-tRNA(Leu) = N-terminal L-leucyl-L-aspartyl-[protein] + tRNA(Leu) + H(+). Its function is as follows. Functions in the N-end rule pathway of protein degradation where it conjugates Leu from its aminoacyl-tRNA to the N-termini of proteins containing an N-terminal aspartate or glutamate. The sequence is that of Aspartate/glutamate leucyltransferase from Stenotrophomonas maltophilia (strain R551-3).